The chain runs to 280 residues: MKRVFGVFGDPVGHSLSPAMHNSAFSALGMDCIYHAFRVRPENLRKAILGAEAMGFGGLNLTVPLKEEALKLDFIRPDPLAERIGAVNTVVFSETGEIRGYNTDGLGARQALLEAAVEIRGSKVVVAGAGGAARAVAFQLAADGAEITVVNRTEERAVELAKDVAAASLPGKINGTGLSGLKELLRDADILINTTTLGMHPNTDTTIATAEELHSGLTVFDIVYNPLETRLLKEAKVAGAKTVSGVLMLVYQGAEAFKLWTGVEAPAELMKKTVLEALQA.

Shikimate is bound by residues 15–17 (SLS) and Thr-62. Catalysis depends on Lys-66, which acts as the Proton acceptor. Shikimate-binding residues include Asn-88 and Asp-104. NADP(+)-binding positions include 128–132 (GAGGA), 151–156 (NRTEER), and Ile-222. Tyr-224 contributes to the shikimate binding site. Gly-245 is a binding site for NADP(+).

The protein belongs to the shikimate dehydrogenase family. In terms of assembly, homodimer.

It catalyses the reaction shikimate + NADP(+) = 3-dehydroshikimate + NADPH + H(+). It participates in metabolic intermediate biosynthesis; chorismate biosynthesis; chorismate from D-erythrose 4-phosphate and phosphoenolpyruvate: step 4/7. In terms of biological role, involved in the biosynthesis of the chorismate, which leads to the biosynthesis of aromatic amino acids. Catalyzes the reversible NADPH linked reduction of 3-dehydroshikimate (DHSA) to yield shikimate (SA). The sequence is that of Shikimate dehydrogenase (NADP(+)) from Methanosarcina acetivorans (strain ATCC 35395 / DSM 2834 / JCM 12185 / C2A).